The primary structure comprises 770 residues: Serine/threonine-protein kinase PLK4 (770 aa).

The Protein kinase domain maps to 14–267; the sequence is YEVQHLLGKG…LEHVLRHPFL (254 aa). Residues 20 to 28 and K43 each bind ATP; that span reads LGKGGFASV. The active-site Proton acceptor is the D138. Residues 383–500 form the Cryptic POLO box 1 (CPB1) domain; the sequence is EERISVPPLN…DRFVGLVKSK (118 aa). The region spanning 501-604 is the Cryptic POLO box 2 (CPB2) domain; it reads TPKVTYFSAL…GRRPVTEVQP (104 aa). Residues 662–741 form the POLO box domain; it reads PIKRINLPDI…LPHIQLKLKT (80 aa).

Belongs to the protein kinase superfamily. Ser/Thr protein kinase family. CDC5/Polo subfamily. In terms of assembly, homodimer. Ubiquitinated by the SCF(Slimb) ubiquitin ligase complex; leading to its degradation by the proteasome during interphase and regulating centriole number and ensuring the block to centriole reduplication.

The protein localises to the cytoplasm. Its subcellular location is the cytoskeleton. It localises to the microtubule organizing center. It is found in the centrosome. The protein resides in the centriole. The catalysed reaction is L-seryl-[protein] + ATP = O-phospho-L-seryl-[protein] + ADP + H(+). It catalyses the reaction L-threonyl-[protein] + ATP = O-phospho-L-threonyl-[protein] + ADP + H(+). Serine/threonine-protein kinase that plays a central role in centriole duplication. Able to trigger procentriole formation on the surface of the mother centriole cylinder, using mother centriole as a platform, leading to the recruitment of centriole biogenesis proteins such as sas-6. When overexpressed, it is able to induce centrosome amplification through the simultaneous generation of multiple procentrioles adjoining each parental centriole during S phase. Centrosome amplification following overexpression can initiate tumorigenesis, highlighting the importance of centrosome regulation in cancers. The polypeptide is Serine/threonine-protein kinase PLK4 (SAK) (Drosophila ananassae (Fruit fly)).